The sequence spans 393 residues: MSGAAKTGDRVRTVYLIATEESGDRLGAALMRELRARLGSKVRFAGVGGHCMAGEGLASLFPIEELSIIGFAAVVQRLPMILKLIRRAVDAVLTAKPDILVIIDSPDFTHRVARRVRQRDPSIPIVDYVSPTVWAWRPGRARAMLGYVDHVLALLPFEPAEYRRLQGPPCSYVGHPLTEQFGSLRPDAAEQARREASPPVLLVLPGSRRSEVRHHAAAFGDTLARLKHEGVAFEAVLPTTPHLEGLVRAAVASWEVQPRIVVGEQDKRAAFRIAHAALAKSGTVTLELAIAGVPMVTAYRAGSVEIWIARRVVRPGTVILANLVMGDDVIPEFIQEDCVPDKLVPAVRDLLGNTPARRRQLAGFAKIDDILSTGEQTPSGRAADIVLDVMRHA.

Belongs to the LpxB family.

The catalysed reaction is a lipid X + a UDP-2-N,3-O-bis[(3R)-3-hydroxyacyl]-alpha-D-glucosamine = a lipid A disaccharide + UDP + H(+). It functions in the pathway bacterial outer membrane biogenesis; LPS lipid A biosynthesis. In terms of biological role, condensation of UDP-2,3-diacylglucosamine and 2,3-diacylglucosamine-1-phosphate to form lipid A disaccharide, a precursor of lipid A, a phosphorylated glycolipid that anchors the lipopolysaccharide to the outer membrane of the cell. This Rhodopseudomonas palustris (strain ATCC BAA-98 / CGA009) protein is Lipid-A-disaccharide synthase.